A 143-amino-acid chain; its full sequence is Transcriptional regulator MraZ (143 aa).

SpoVT-AbrB domains lie at Ser5–Glu47 and Ala76–Arg119.

It belongs to the MraZ family. In terms of assembly, forms oligomers.

It localises to the cytoplasm. Its subcellular location is the nucleoid. The polypeptide is Transcriptional regulator MraZ (Parafrankia sp. (strain EAN1pec)).